Here is a 51-residue protein sequence, read N- to C-terminus: U-Asilidin(1)-Eru1a (51 aa).

The N-terminal stretch at 1-23 (MANYIDVLSFLAIICATVLATLA) is a signal peptide. 3 disulfides stabilise this stretch: Cys-26-Cys-40, Cys-33-Cys-44, and Cys-39-Cys-49.

It belongs to the asilidin-1 family. As to expression, expressed by the venom gland. The most highly expressed peptides U-Asilidin1-Mar1a is around 3000 times higher expressed in the venom thoracic glands compared to its body tissues.

It is found in the secreted. Its function is as follows. Induces neurotoxic effect on honeybees, including slow movements, disorientation and paralysis. Since it provokes similar symptoms than omega-atracotoxin, it is probable that it acts in the same way by inhibiting voltage-gated calcium channels. In Eutolmus rufibarbis (Golden-tabbed robberfly), this protein is U-Asilidin(1)-Eru1a.